A 60-amino-acid chain; its full sequence is MTCCNQQSSQPKTTTNCAESSCYKKTWSDHRGTRIERGCGCPQVKSGIKLECCHTNECNN.

Disulfide bonds link C3–C22, C17–C39, C41–C52, and C53–C58.

Belongs to the three-finger toxin family. Short-chain subfamily. Type I alpha-neurotoxin sub-subfamily. As to expression, expressed by the venom gland.

It is found in the secreted. Binds to muscle nicotinic acetylcholine receptor (nAChR) and inhibit acetylcholine from binding to the receptor, thereby impairing neuromuscular transmission. This chain is Toxin 5, found in Hydrophis schistosus (Beaked sea snake).